The sequence spans 1624 residues: Pappalysin-1 (1624 aa).

The N-terminal stretch at 1 to 22 is a signal peptide; the sequence is MRLWSWVLRLGLLSAALGCGLA. Residues 23-81 constitute a propeptide that is removed on maturation; sequence ERPRRVRRDPRAVRPPRPAAGPATCATRAARGRRASPPPPPGGAWEAVRVPRRRQQRAA. A disordered region spans residues 28–93; sequence VRRDPRAVRP…AEEPSPPSRA (66 aa). Low complexity predominate over residues 42–51; the sequence is AGPATCATRA. Intrachain disulfides connect Cys-141–Cys-232, Cys-324–Cys-619, Cys-329–Cys-654, Cys-411–Cys-425, Cys-421–Cys-437, Cys-454–Cys-470, Cys-471–Cys-482, Cys-580–Cys-597, Cys-584–Cys-609, Cys-707–Cys-875, Cys-710–Cys-878, Cys-750–Cys-832, Cys-772–Cys-778, Cys-944–Cys-972, Cys-957–Cys-968, Cys-980–Cys-987, and Cys-996–Cys-1008. Residues 272 to 583 form a metalloprotease region; it reads RGLHTPLPQL…ISEIQSCSDP (312 aa). 2 N-linked (GlcNAc...) asparagine glycosylation sites follow: Asn-387 and Asn-398. N-linked (GlcNAc...) asparagine glycosylation occurs at Asn-426. The N-linked (GlcNAc...) asparagine glycan is linked to Asn-516. His-559 contacts Zn(2+). Glu-560 is an active-site residue. His-563 and His-569 together coordinate Zn(2+). N-linked (GlcNAc...) asparagine glycans are attached at residues Asn-598, Asn-616, and Asn-722. An N-linked (GlcNAc...) asparagine glycan is attached at Asn-822. Asn-1023 is a glycosylation site (N-linked (GlcNAc...) asparagine). Intrachain disulfides connect Cys-1033–Cys-1067, Cys-1048–Cys-1136, Cys-1189–Cys-1202, Cys-1212–Cys-1266, Cys-1224–Cys-1235, Cys-1239–Cys-1277, Cys-1282–Cys-1326, Cys-1297–Cys-1307, Cys-1311–Cys-1339, Cys-1343–Cys-1396, Cys-1359–Cys-1370, Cys-1374–Cys-1407, Cys-1412–Cys-1455, Cys-1425–Cys-1435, Cys-1439–Cys-1468, Cys-1475–Cys-1536, Cys-1489–Cys-1499, Cys-1503–Cys-1551, and Cys-1555–Cys-1573. Sushi domains lie at 1210 to 1279, 1280 to 1341, 1342 to 1409, 1410 to 1470, and 1473 to 1553; these read ADCP…ACEP, VDCG…LCEL, MCLA…TCVP, VTCD…VCRE, and GQCS…HCVK. Asn-1219 and Asn-1223 each carry an N-linked (GlcNAc...) asparagine glycan. Asn-1320 is a glycosylation site (N-linked (GlcNAc...) asparagine). N-linked (GlcNAc...) asparagine glycosylation occurs at Asn-1516.

Belongs to the peptidase M43B family. Homodimer; disulfide-linked. In pregnancy serum, predominantly found as a disulfide-linked 2:2 heterotetramer with the proform of PRG2. It depends on Zn(2+) as a cofactor. As to expression, detected in kidney, spleen, brain, ovary, breast, skin, prostate, uterus, and placenta.

The protein resides in the secreted. It carries out the reaction Cleavage of the 135-Met-|-Lys-136 bond in insulin-like growth factor binding protein (IGFBP)-4, and the 143-Ser-|-Lys-144 bond in IGFBP-5.. Metalloproteinase which specifically cleaves IGFBP-4 and IGFBP-5, resulting in release of bound IGF. Cleavage of IGFBP-4 is dramatically enhanced by the presence of IGF, whereas cleavage of IGFBP-5 is slightly inhibited by the presence of IGF. Isoform 2 cleaves IGFBP-4 very slowly compared to PAPP-A, but its ability to cleave IGFBP-5 is unaffected. The chain is Pappalysin-1 (Pappa) from Mus musculus (Mouse).